Here is a 333-residue protein sequence, read N- to C-terminus: T-cell surface glycoprotein CD1b-1 (333 aa).

The N-terminal stretch at 1 to 18 (MLLLPLLLLAVIVPGGDN) is a signal peptide. Topologically, residues 19–302 (EDVFQGPTSF…LYWGHPTSTG (284 aa)) are extracellular. 4 N-linked (GlcNAc...) asparagine glycosylation sites follow: asparagine 38, asparagine 75, asparagine 146, and asparagine 258. Disulfide bonds link cysteine 120–cysteine 184 and cysteine 224–cysteine 279. The 111-residue stretch at 185–295 (PRYFLSVLDA…LGDQDIVLYW (111 aa)) folds into the Ig-like domain. Residues 303-323 (LIFVAIIVSSLILLICLALWF) form a helical membrane-spanning segment. At 324–333 (WRRWSYLTIL) the chain is on the cytoplasmic side. The short motif at 329–332 (YLTI) is the Internalization signal element.

In terms of assembly, heterodimer with B2M (beta-2-microglobulin). Interacts with saposin C.

The protein localises to the cell membrane. Its subcellular location is the endosome membrane. The protein resides in the lysosome membrane. In terms of biological role, antigen-presenting protein that binds self and non-self lipid and glycolipid antigens and presents them to T-cell receptors on natural killer T-cells. The protein is T-cell surface glycoprotein CD1b-1 of Ovis aries (Sheep).